Consider the following 348-residue polypeptide: Mediator of RNA polymerase II transcription subunit 18 (348 aa).

Residues 152-218 are compositionally biased toward basic and acidic residues; sequence MDVDLEHKDK…KNDEVKHSEV (67 aa). The tract at residues 152-227 is disordered; that stretch reads MDVDLEHKDK…VNLEDGAETG (76 aa). Residues 167–223 adopt a coiled-coil conformation; sequence DTKEKEEDKKEEDKKEEDKKEEDKKEEDKKEEDKKEEEKVEKKNDEVKHSEVNLEDG.

The protein belongs to the Mediator complex subunit 18 family. As to quaternary structure, component of the Mediator complex.

Its subcellular location is the nucleus. Its function is as follows. Component of the Mediator complex, a coactivator involved in the regulated transcription of nearly all RNA polymerase II-dependent genes. Mediator functions as a bridge to convey information from gene-specific regulatory proteins to the basal RNA polymerase II transcription machinery. Mediator is recruited to promoters by direct interactions with regulatory proteins and serves as a scaffold for the assembly of a functional preinitiation complex with RNA polymerase II and the general transcription factors. The chain is Mediator of RNA polymerase II transcription subunit 18 (SRB5) from Scheffersomyces stipitis (strain ATCC 58785 / CBS 6054 / NBRC 10063 / NRRL Y-11545) (Yeast).